A 152-amino-acid chain; its full sequence is SKP1-like protein 12 (152 aa).

Residues 94-152 form an interaction with the F-box domain of F-box proteins region; that stretch reads ILAANYLNIKSLFDLTCQTVADMIKGKTPEEIRSTFNIENDFTPEEEEAVRKENQWAFE.

This sequence belongs to the SKP1 family. In terms of assembly, part of a SCF (SKP1-cullin-F-box) protein ligase complex. Interacts with ADO3/FKF1, COI1/FBL2, EBF1/FBL6, PP2B10, At3g61590 and At5g49610. Expressed in young seedlings, roots, leaves, floral stems, inflorescences, and siliques, with a slightly higher level in inflorescence than in other tissues.

The protein localises to the nucleus. It functions in the pathway protein modification; protein ubiquitination. Functionally, involved in ubiquitination and subsequent proteasomal degradation of target proteins. Together with CUL1, RBX1 and a F-box protein, it forms a SCF E3 ubiquitin ligase complex. The functional specificity of this complex depends on the type of F-box protein. In the SCF complex, it serves as an adapter that links the F-box protein to CUL1. Plays a role during early flowers reproductive development. This Arabidopsis thaliana (Mouse-ear cress) protein is SKP1-like protein 12 (ASK12).